The following is a 496-amino-acid chain: MGTQKVTPALIFAITVATIGSFQFGYNTGVINAPEKIIKEFINKTLTDKGNAPPSEVLLTSLWSLSVAIFSVGGMIGSFSVGLFVNRFGRRNSMLIVNLLAVTGGCFMGLCKVAKSVEMLILGRLIIGLFCGLCTGFVPMYIGEISPTALRGAFGTLNQLGIVVGILVAQIFGLEFILGSEELWPLLLGFTILPTILQSAALPFCPESPRFLLINRKEEENAKQILQRLWGTQDVSQDIQEMKDESARMSQEKQVTVLELFRVSSYRQPIIISIVLQLSQQLSGINAVFYYSTGIFKDAGVQEPIYATIGAGVVNTIFTVVSLFLVERAGRRTLHMIGLGGMAFCSTLMTVSLLLKDNYNGMSFVCIGAILVFVAFFEIGPGPIPWFIVAELFSQGPRPAAMAVAGCSNWTSNFLVGLLFPSAAHYLGAYVFIIFTGFLITFLAFTFFKVPETRGRTFEDITRAFEGQAHGADRSGKDGVMEVNSIEPAKETTTNV.

Over 1 to 10 (MGTQKVTPAL) the chain is Cytoplasmic. A helical membrane pass occupies residues 11–32 (IFAITVATIGSFQFGYNTGVIN). Residues 33-64 (APEKIIKEFINKTLTDKGNAPPSEVLLTSLWS) lie on the Extracellular side of the membrane. N43 carries an N-linked (GlcNAc...) asparagine glycan. A helical membrane pass occupies residues 65–85 (LSVAIFSVGGMIGSFSVGLFV). Topologically, residues 86 to 90 (NRFGR) are cytoplasmic. Residues 91-111 (RNSMLIVNLLAVTGGCFMGLC) traverse the membrane as a helical segment. At 112–118 (KVAKSVE) the chain is on the extracellular side. A helical transmembrane segment spans residues 119–142 (MLILGRLIIGLFCGLCTGFVPMYI). Residues 143-153 (GEISPTALRGA) lie on the Cytoplasmic side of the membrane. A helical transmembrane segment spans residues 154 to 174 (FGTLNQLGIVVGILVAQIFGL). Q159 contributes to the D-glucose binding site. The Extracellular segment spans residues 175–183 (EFILGSEEL). The helical transmembrane segment at 184–204 (WPLLLGFTILPTILQSAALPF) threads the bilayer. At 205–269 (CPESPRFLLI…LFRVSSYRQP (65 aa)) the chain is on the cytoplasmic side. T232 bears the Phosphothreonine mark. A helical transmembrane segment spans residues 270-290 (IIISIVLQLSQQLSGINAVFY). Positions 277–279 (QLS) are important for selectivity against fructose. Residues 280–281 (QQ) and N286 contribute to the D-glucose site. Residues 291 to 304 (YSTGIFKDAGVQEP) lie on the Extracellular side of the membrane. Residues 305–325 (IYATIGAGVVNTIFTVVSLFL) traverse the membrane as a helical segment. N315 provides a ligand contact to D-glucose. The Cytoplasmic segment spans residues 326–331 (VERAGR). A helical transmembrane segment spans residues 332 to 352 (RTLHMIGLGGMAFCSTLMTVS). Over 353–363 (LLLKDNYNGMS) the chain is Extracellular. A helical membrane pass occupies residues 364-389 (FVCIGAILVFVAFFEIGPGPIPWFIV). Residues E378 and W386 each coordinate D-glucose. Residues 390-399 (AELFSQGPRP) lie on the Cytoplasmic side of the membrane. Residues 400 to 420 (AAMAVAGCSNWTSNFLVGLLF) form a helical membrane-spanning segment. The Extracellular portion of the chain corresponds to 421–429 (PSAAHYLGA). The helical transmembrane segment at 430 to 450 (YVFIIFTGFLITFLAFTFFKV) threads the bilayer. Topologically, residues 451-496 (PETRGRTFEDITRAFEGQAHGADRSGKDGVMEVNSIEPAKETTTNV) are cytoplasmic. S475 and S485 each carry phosphoserine. T492 bears the Phosphothreonine mark.

Belongs to the major facilitator superfamily. Sugar transporter (TC 2.A.1.1) family. Glucose transporter subfamily. As to quaternary structure, interacts with SMIM43; the interaction may promote SLC2A3-mediated glucose transport to meet the energy needs of mesendoderm differentiation.

It is found in the cell membrane. It localises to the perikaryon. The protein resides in the cell projection. It catalyses the reaction D-glucose(out) = D-glucose(in). The enzyme catalyses D-galactose(in) = D-galactose(out). With respect to regulation, deoxyglucose transport is inhibited by D-glucose, D-galactose and maltose. Galactose transport is inhibited by D-glucose and maltose. Functionally, facilitative glucose transporter. Can also mediate the uptake of various other monosaccharides across the cell membrane. Mediates the uptake of glucose, 2-deoxyglucose, galactose, mannose, xylose and fucose, and probably also dehydroascorbate. Does not mediate fructose transport. Required for mesendoderm differentiation. The polypeptide is Solute carrier family 2, facilitated glucose transporter member 3 (Pongo abelii (Sumatran orangutan)).